The sequence spans 174 residues: Crossover junction endodeoxyribonuclease RuvC (174 aa).

Residues Asp8, Glu67, and Asp139 contribute to the active site. The Mg(2+) site is built by Asp8, Glu67, and Asp139.

This sequence belongs to the RuvC family. Homodimer which binds Holliday junction (HJ) DNA. The HJ becomes 2-fold symmetrical on binding to RuvC with unstacked arms; it has a different conformation from HJ DNA in complex with RuvA. In the full resolvosome a probable DNA-RuvA(4)-RuvB(12)-RuvC(2) complex forms which resolves the HJ. It depends on Mg(2+) as a cofactor.

It localises to the cytoplasm. The enzyme catalyses Endonucleolytic cleavage at a junction such as a reciprocal single-stranded crossover between two homologous DNA duplexes (Holliday junction).. Its function is as follows. The RuvA-RuvB-RuvC complex processes Holliday junction (HJ) DNA during genetic recombination and DNA repair. Endonuclease that resolves HJ intermediates. Cleaves cruciform DNA by making single-stranded nicks across the HJ at symmetrical positions within the homologous arms, yielding a 5'-phosphate and a 3'-hydroxyl group; requires a central core of homology in the junction. The consensus cleavage sequence is 5'-(A/T)TT(C/G)-3'. Cleavage occurs on the 3'-side of the TT dinucleotide at the point of strand exchange. HJ branch migration catalyzed by RuvA-RuvB allows RuvC to scan DNA until it finds its consensus sequence, where it cleaves and resolves the cruciform DNA. This Pseudomonas paraeruginosa (strain DSM 24068 / PA7) (Pseudomonas aeruginosa (strain PA7)) protein is Crossover junction endodeoxyribonuclease RuvC.